Consider the following 161-residue polypeptide: Phosphopantetheine adenylyltransferase (161 aa).

Thr10 contributes to the substrate binding site. Residues 10–11 (TF) and His18 each bind ATP. Lys42, Met74, and Arg88 together coordinate substrate. ATP is bound by residues 89 to 91 (GLR), Glu99, and 124 to 130 (WSFISSS).

It belongs to the bacterial CoaD family. As to quaternary structure, homohexamer. The cofactor is Mg(2+).

It is found in the cytoplasm. It catalyses the reaction (R)-4'-phosphopantetheine + ATP + H(+) = 3'-dephospho-CoA + diphosphate. It participates in cofactor biosynthesis; coenzyme A biosynthesis; CoA from (R)-pantothenate: step 4/5. Functionally, reversibly transfers an adenylyl group from ATP to 4'-phosphopantetheine, yielding dephospho-CoA (dPCoA) and pyrophosphate. This chain is Phosphopantetheine adenylyltransferase, found in Edwardsiella ictaluri (strain 93-146).